The sequence spans 58 residues: UPF0391 membrane protein OCAR_5266/OCA5_c27040 (58 aa).

The next 2 helical transmembrane spans lie at 4 to 24 (WVVT…GGIA) and 30 to 50 (IAKI…VVGL).

Belongs to the UPF0391 family.

The protein localises to the cell membrane. The sequence is that of UPF0391 membrane protein OCAR_5266/OCA5_c27040 from Afipia carboxidovorans (strain ATCC 49405 / DSM 1227 / KCTC 32145 / OM5) (Oligotropha carboxidovorans).